The chain runs to 89 residues: Large ribosomal subunit protein eL34 (89 aa).

Positions 45–71 (GIPRGRPVEMRKLPKTKKRPERPMPHL) are disordered.

The protein belongs to the eukaryotic ribosomal protein eL34 family. In terms of assembly, part of the 50S ribosomal subunit.

This Pyrococcus furiosus (strain ATCC 43587 / DSM 3638 / JCM 8422 / Vc1) protein is Large ribosomal subunit protein eL34.